The chain runs to 290 residues: Diaminopimelate epimerase (290 aa).

Substrate-binding residues include Asn-17, Gln-49, and Asn-69. Cys-78 serves as the catalytic Proton donor. Residues 79 to 80 (GN), Asn-166, Asn-199, and 217 to 218 (ER) contribute to the substrate site. Catalysis depends on Cys-226, which acts as the Proton acceptor. A substrate-binding site is contributed by 227–228 (GS).

It belongs to the diaminopimelate epimerase family. Homodimer.

The protein resides in the cytoplasm. The catalysed reaction is (2S,6S)-2,6-diaminopimelate = meso-2,6-diaminopimelate. Its pathway is amino-acid biosynthesis; L-lysine biosynthesis via DAP pathway; DL-2,6-diaminopimelate from LL-2,6-diaminopimelate: step 1/1. In terms of biological role, catalyzes the stereoinversion of LL-2,6-diaminopimelate (L,L-DAP) to meso-diaminopimelate (meso-DAP), a precursor of L-lysine and an essential component of the bacterial peptidoglycan. This chain is Diaminopimelate epimerase, found in Afipia carboxidovorans (strain ATCC 49405 / DSM 1227 / KCTC 32145 / OM5) (Oligotropha carboxidovorans).